We begin with the raw amino-acid sequence, 186 residues long: UPF0301 protein CV_3909 (186 aa).

The protein belongs to the UPF0301 (AlgH) family.

This chain is UPF0301 protein CV_3909, found in Chromobacterium violaceum (strain ATCC 12472 / DSM 30191 / JCM 1249 / CCUG 213 / NBRC 12614 / NCIMB 9131 / NCTC 9757 / MK).